We begin with the raw amino-acid sequence, 520 residues long: Maturase K (520 aa).

Belongs to the intron maturase 2 family. MatK subfamily.

It localises to the plastid. The protein resides in the chloroplast. Its function is as follows. Usually encoded in the trnK tRNA gene intron. Probably assists in splicing its own and other chloroplast group II introns. This is Maturase K from Iris cristata (Dwarf crested iris).